Consider the following 450-residue polypeptide: Phosphoglucosamine mutase (450 aa).

Serine 103 functions as the Phosphoserine intermediate in the catalytic mechanism. Mg(2+) is bound by residues serine 103, aspartate 243, aspartate 245, and aspartate 247. Serine 103 is subject to Phosphoserine.

This sequence belongs to the phosphohexose mutase family. Requires Mg(2+) as cofactor. In terms of processing, activated by phosphorylation.

The enzyme catalyses alpha-D-glucosamine 1-phosphate = D-glucosamine 6-phosphate. Catalyzes the conversion of glucosamine-6-phosphate to glucosamine-1-phosphate. The protein is Phosphoglucosamine mutase of Latilactobacillus sakei subsp. sakei (strain 23K) (Lactobacillus sakei subsp. sakei).